The chain runs to 563 residues: Membrane protein insertase YidC (563 aa).

The helical transmembrane segment at 1-21 (MDIKRTILIVALAIVTYVGVL) threads the bilayer. A disordered region spans residues 43-62 (APGIPDTAAGTNGSASADVP). Transmembrane regions (helical) follow at residues 344-364 (LELT…FWLL), 370-390 (ILGN…GLFF), 440-460 (LGGC…YWVL), 471-491 (WILW…PIIM), and 518-538 (PIIF…YWVV).

The protein belongs to the OXA1/ALB3/YidC family. Type 1 subfamily. In terms of assembly, interacts with the Sec translocase complex via SecD. Specifically interacts with transmembrane segments of nascent integral membrane proteins during membrane integration.

It localises to the cell inner membrane. Functionally, required for the insertion and/or proper folding and/or complex formation of integral membrane proteins into the membrane. Involved in integration of membrane proteins that insert both dependently and independently of the Sec translocase complex, as well as at least some lipoproteins. Aids folding of multispanning membrane proteins. This is Membrane protein insertase YidC from Pseudomonas syringae pv. syringae (strain B728a).